A 320-amino-acid polypeptide reads, in one-letter code: MEVKEVVVIVKWSGKEYPVDLTDQDTVEVLRHEIFRKTQVRPERQKLLNLKYKGKTAADNVKISALELKPNFKLMMVGSTEADIEDACSLPDNIGEVVDDFDDADEREESVEHSAVYLAKVQRRVRDYKIKELAPPREGKKLLVLDIDYTLFDHRSPAETGTELMRPYLHEFLTSAYEDYDIVIWSATSMRWIEEKMRLLGVASNDNYKVMFYLDSTAMISVHVPERGVVDVKPLGVIWALYKQYNSSNTIMFDDIRRNFLMNPKSGLKIRPFRQAHLNRGTDTELLKLSDYLRKIAHHCPDFNSLNHRKWEHYHPKKNS.

The region spanning 6 to 77 (VVVIVKWSGK…LKPNFKLMMV (72 aa)) is the Ubiquitin-like domain. The FCP1 homology domain occupies 136 to 296 (PREGKKLLVL…LKLSDYLRKI (161 aa)). Residues D146, D148, and D255 each coordinate Mg(2+).

Mg(2+) is required as a cofactor.

The protein localises to the nucleus. The enzyme catalyses O-phospho-L-seryl-[protein] + H2O = L-seryl-[protein] + phosphate. The catalysed reaction is O-phospho-L-threonyl-[protein] + H2O = L-threonyl-[protein] + phosphate. Dephosphorylates 26S nuclear proteasomes, thereby decreasing their proteolytic activity. Recruited to the 19S regulatory particle of the 26S proteasome where it dephosphorylates 19S component Rpt1 which impairs Rpt1 ATPase activity and disrupts 26S proteasome assembly. This is Ubiquitin-like domain-containing CTD phosphatase 1 from Drosophila melanogaster (Fruit fly).